The following is a 403-amino-acid chain: Phosphoglycerate kinase (403 aa).

Substrate contacts are provided by residues 21 to 23 (DFN), arginine 36, 59 to 62 (HLGR), arginine 118, and arginine 151. ATP contacts are provided by residues lysine 202, glutamate 328, and 354–357 (GGDS).

This sequence belongs to the phosphoglycerate kinase family. Monomer.

It localises to the cytoplasm. The catalysed reaction is (2R)-3-phosphoglycerate + ATP = (2R)-3-phospho-glyceroyl phosphate + ADP. It functions in the pathway carbohydrate degradation; glycolysis; pyruvate from D-glyceraldehyde 3-phosphate: step 2/5. The protein is Phosphoglycerate kinase of Akkermansia muciniphila (strain ATCC BAA-835 / DSM 22959 / JCM 33894 / BCRC 81048 / CCUG 64013 / CIP 107961 / Muc).